Here is a 394-residue protein sequence, read N- to C-terminus: 1-deoxy-D-xylulose 5-phosphate reductoisomerase (394 aa).

Residues T13, G14, S15, I16, and N127 each contribute to the NADPH site. Residue K128 participates in 1-deoxy-D-xylulose 5-phosphate binding. E129 contacts NADPH. D153 is a Mn(2+) binding site. 1-deoxy-D-xylulose 5-phosphate contacts are provided by S154, E155, S184, and H207. E155 serves as a coordination point for Mn(2+). G213 is an NADPH binding site. S220, N225, K226, and E229 together coordinate 1-deoxy-D-xylulose 5-phosphate. E229 lines the Mn(2+) pocket.

It belongs to the DXR family. Requires Mg(2+) as cofactor. It depends on Mn(2+) as a cofactor.

It carries out the reaction 2-C-methyl-D-erythritol 4-phosphate + NADP(+) = 1-deoxy-D-xylulose 5-phosphate + NADPH + H(+). Its pathway is isoprenoid biosynthesis; isopentenyl diphosphate biosynthesis via DXP pathway; isopentenyl diphosphate from 1-deoxy-D-xylulose 5-phosphate: step 1/6. In terms of biological role, catalyzes the NADPH-dependent rearrangement and reduction of 1-deoxy-D-xylulose-5-phosphate (DXP) to 2-C-methyl-D-erythritol 4-phosphate (MEP). The chain is 1-deoxy-D-xylulose 5-phosphate reductoisomerase from Ectopseudomonas mendocina (strain ymp) (Pseudomonas mendocina).